We begin with the raw amino-acid sequence, 130 residues long: Small ribosomal subunit protein uS11 (130 aa).

This sequence belongs to the universal ribosomal protein uS11 family. As to quaternary structure, part of the 30S ribosomal subunit.

In terms of biological role, located on the platform of the 30S subunit. The chain is Small ribosomal subunit protein uS11 from Thermoplasma acidophilum (strain ATCC 25905 / DSM 1728 / JCM 9062 / NBRC 15155 / AMRC-C165).